The sequence spans 629 residues: tRNA uridine 5-carboxymethylaminomethyl modification enzyme MnmG (629 aa).

An FAD-binding site is contributed by 13 to 18 (GGGHAG). 273-287 (GPRYCPSIEDKVVRF) serves as a coordination point for NAD(+).

It belongs to the MnmG family. Homodimer. Heterotetramer of two MnmE and two MnmG subunits. FAD serves as cofactor.

It is found in the cytoplasm. Its function is as follows. NAD-binding protein involved in the addition of a carboxymethylaminomethyl (cmnm) group at the wobble position (U34) of certain tRNAs, forming tRNA-cmnm(5)s(2)U34. The chain is tRNA uridine 5-carboxymethylaminomethyl modification enzyme MnmG from Alkalilimnicola ehrlichii (strain ATCC BAA-1101 / DSM 17681 / MLHE-1).